Reading from the N-terminus, the 206-residue chain is Ribosomal RNA large subunit methyltransferase E (206 aa).

Gly54, Trp56, Asp76, Asp94, and Asp118 together coordinate S-adenosyl-L-methionine. Lys158 acts as the Proton acceptor in catalysis.

This sequence belongs to the class I-like SAM-binding methyltransferase superfamily. RNA methyltransferase RlmE family.

It localises to the cytoplasm. The catalysed reaction is uridine(2552) in 23S rRNA + S-adenosyl-L-methionine = 2'-O-methyluridine(2552) in 23S rRNA + S-adenosyl-L-homocysteine + H(+). Functionally, specifically methylates the uridine in position 2552 of 23S rRNA at the 2'-O position of the ribose in the fully assembled 50S ribosomal subunit. This chain is Ribosomal RNA large subunit methyltransferase E, found in Methanosphaera stadtmanae (strain ATCC 43021 / DSM 3091 / JCM 11832 / MCB-3).